The sequence spans 298 residues: Apolipoprotein E (298 aa).

The signal sequence occupies residues 1 to 18 (MKVLWAALVVTLLAGCQA). A run of 6 repeats spans residues 74-95 (LLME…QELA), 96-117 (PMAE…SRLR), 118-139 (ADME…TMMG), 140-161 (QSGE…KRLL), 162-183 (RDVE…EGAE), and 223-244 (GRLE…EQME). The tract at residues 74 to 244 (LLMEDTMKEV…RLEEVREQME (171 aa)) is 8 X 22 AA approximate tandem repeats. The residue at position 137 (Met-137) is a Methionine sulfoxide. A Phosphoserine modification is found at Ser-141. An LDL and other lipoprotein receptors binding region spans residues 152-162 (HLRKLRKRLLR). 156-159 (LRKR) serves as a coordination point for heparin. Residues 204–272 (SLPSQPLRER…SWFEPMMEDM (69 aa)) are lipid-binding and lipoprotein association. 218-225 (GEQMRGRL) lines the heparin pocket. The specificity for association with VLDL stretch occupies residues 260-272 (RFKSWFEPMMEDM).

The protein belongs to the apolipoprotein A1/A4/E family. Homotetramer. May interact with ABCA1; functionally associated with ABCA1 in the biogenesis of HDLs. May interact with APP/A4 amyloid-beta peptide; the interaction is extremely stable in vitro but its physiological significance is unclear. May interact with MAPT. May interact with MAP2. In the cerebrospinal fluid, interacts with secreted SORL1. Interacts with PMEL; this allows the loading of PMEL luminal fragment on ILVs to induce fibril nucleation. Post-translationally, APOE exists as multiple glycosylated and sialylated glycoforms within cells and in plasma. The extent of glycosylation and sialylation are tissue and context specific. In terms of processing, glycated in plasma VLDL. Phosphorylated by FAM20C in the extracellular medium.

The protein localises to the secreted. It is found in the extracellular space. The protein resides in the extracellular matrix. It localises to the extracellular vesicle. Its subcellular location is the endosome. The protein localises to the multivesicular body. Its function is as follows. APOE is an apolipoprotein, a protein associating with lipid particles, that mainly functions in lipoprotein-mediated lipid transport between organs via the plasma and interstitial fluids. APOE is a core component of plasma lipoproteins and is involved in their production, conversion and clearance. Apolipoproteins are amphipathic molecules that interact both with lipids of the lipoprotein particle core and the aqueous environment of the plasma. As such, APOE associates with chylomicrons, chylomicron remnants, very low density lipoproteins (VLDL) and intermediate density lipoproteins (IDL) but shows a preferential binding to high-density lipoproteins (HDL). It also binds a wide range of cellular receptors including the LDL receptor/LDLR, the LDL receptor-related proteins LRP1, LRP2 and LRP8 and the very low-density lipoprotein receptor/VLDLR that mediate the cellular uptake of the APOE-containing lipoprotein particles. Finally, APOE also has a heparin-binding activity and binds heparan-sulfate proteoglycans on the surface of cells, a property that supports the capture and the receptor-mediated uptake of APOE-containing lipoproteins by cells. A main function of APOE is to mediate lipoprotein clearance through the uptake of chylomicrons, VLDLs, and HDLs by hepatocytes. APOE is also involved in the biosynthesis by the liver of VLDLs as well as their uptake by peripheral tissues ensuring the delivery of triglycerides and energy storage in muscle, heart and adipose tissues. By participating in the lipoprotein-mediated distribution of lipids among tissues, APOE plays a critical role in plasma and tissues lipid homeostasis. APOE is also involved in two steps of reverse cholesterol transport, the HDLs-mediated transport of cholesterol from peripheral tissues to the liver, and thereby plays an important role in cholesterol homeostasis. First, it is functionally associated with ABCA1 in the biogenesis of HDLs in tissues. Second, it is enriched in circulating HDLs and mediates their uptake by hepatocytes. APOE also plays an important role in lipid transport in the central nervous system, regulating neuron survival and sprouting. In Dasyprocta punctata (Central American agouti), this protein is Apolipoprotein E (APOE).